A 184-amino-acid polypeptide reads, in one-letter code: Protein GrpE (184 aa).

Positions 1–26 are enriched in polar residues; sequence MANEQNEQAQDIQNEQVEQSNEQTQA. The tract at residues 1 to 34 is disordered; sequence MANEQNEQAQDIQNEQVEQSNEQTQAEGVEQAND.

It belongs to the GrpE family. In terms of assembly, homodimer.

The protein resides in the cytoplasm. In terms of biological role, participates actively in the response to hyperosmotic and heat shock by preventing the aggregation of stress-denatured proteins, in association with DnaK and GrpE. It is the nucleotide exchange factor for DnaK and may function as a thermosensor. Unfolded proteins bind initially to DnaJ; upon interaction with the DnaJ-bound protein, DnaK hydrolyzes its bound ATP, resulting in the formation of a stable complex. GrpE releases ADP from DnaK; ATP binding to DnaK triggers the release of the substrate protein, thus completing the reaction cycle. Several rounds of ATP-dependent interactions between DnaJ, DnaK and GrpE are required for fully efficient folding. The chain is Protein GrpE from Acinetobacter baumannii (strain AB307-0294).